The following is a 446-amino-acid chain: Probable cytosolic iron-sulfur protein assembly protein 1 (446 aa).

7 WD repeats span residues 17-59 (AFKP…AHSN), 63-106 (GHTR…PLEE), 143-182 (GHEN…EGDD), 192-241 (EHDG…EWAC), 247-291 (GHSS…PEAS), 330-368 (VHTR…NPST), and 398-446 (GHGP…SIEL). Basic and acidic residues predominate over residues 106–128 (EGTKKGESTEIDVTRRRNNNDSD). Residues 106–133 (EGTKKGESTEIDVTRRRNNNDSDKDNDD) are disordered.

This sequence belongs to the WD repeat CIA1 family.

In terms of biological role, essential component of the cytosolic iron-sulfur (Fe/S) protein assembly machinery. Required for the maturation of extramitochondrial Fe/S proteins. This chain is Probable cytosolic iron-sulfur protein assembly protein 1, found in Pyricularia oryzae (strain 70-15 / ATCC MYA-4617 / FGSC 8958) (Rice blast fungus).